Consider the following 51-residue polypeptide: 2,3,4,5-tetrahydropyridine-2,6-dicarboxylate N-succinyltransferase (51 aa).

Belongs to the transferase hexapeptide repeat family. In terms of assembly, homotrimer.

It localises to the cytoplasm. It catalyses the reaction (S)-2,3,4,5-tetrahydrodipicolinate + succinyl-CoA + H2O = (S)-2-succinylamino-6-oxoheptanedioate + CoA. It functions in the pathway amino-acid biosynthesis; L-lysine biosynthesis via DAP pathway; LL-2,6-diaminopimelate from (S)-tetrahydrodipicolinate (succinylase route): step 1/3. The protein is 2,3,4,5-tetrahydropyridine-2,6-dicarboxylate N-succinyltransferase (dapD) of Klebsiella oxytoca.